Here is a 761-residue protein sequence, read N- to C-terminus: Hyperosmolality-gated Ca2+ permeable channel 1.6 (761 aa).

10 helical membrane passes run 7 to 27 (IGVA…AFAI), 101 to 121 (IYLL…TTMV), 156 to 176 (PRFW…CFIL), 375 to 395 (LIVG…IAFV), 419 to 439 (LLKS…FLLF), 467 to 487 (FYMF…TAFQ), 512 to 532 (ATFF…GEIL), 583 to 603 (AAVS…AFVV), 630 to 650 (VVTA…TKHA), and 653 to 673 (STPL…HCKN). Residues 718-731 (RVGEDPEPEEKLES) are compositionally biased toward basic and acidic residues. The tract at residues 718–761 (RVGEDPEPEEKLESDMSPPDLVATKRWSWRNTPLPSKDSCREIP) is disordered.

This sequence belongs to the CSC1 (TC 1.A.17) family.

Its subcellular location is the membrane. In terms of biological role, acts as an osmosensitive calcium-permeable cation channel. In Arabidopsis thaliana (Mouse-ear cress), this protein is Hyperosmolality-gated Ca2+ permeable channel 1.6.